The primary structure comprises 98 residues: NADH-ubiquinone oxidoreductase chain 4L (98 aa).

3 helical membrane passes run Pro-2–Phe-22, Ser-29–Leu-49, and Ile-61–Val-81.

It belongs to the complex I subunit 4L family. Core subunit of respiratory chain NADH dehydrogenase (Complex I) which is composed of 45 different subunits.

It is found in the mitochondrion inner membrane. It carries out the reaction a ubiquinone + NADH + 5 H(+)(in) = a ubiquinol + NAD(+) + 4 H(+)(out). In terms of biological role, core subunit of the mitochondrial membrane respiratory chain NADH dehydrogenase (Complex I) which catalyzes electron transfer from NADH through the respiratory chain, using ubiquinone as an electron acceptor. Part of the enzyme membrane arm which is embedded in the lipid bilayer and involved in proton translocation. The sequence is that of NADH-ubiquinone oxidoreductase chain 4L (MT-ND4L) from Eulemur coronatus (Crowned lemur).